Here is a 335-residue protein sequence, read N- to C-terminus: Ketol-acid reductoisomerase (NADP(+)) (335 aa).

Residues 5–185 form the KARI N-terminal Rossmann domain; the sequence is SKIYTDNDAN…GATRAGVIPT (181 aa). NADP(+) is bound by residues 28-31, Ser-56, and 86-89; these read YGSQ and DMVQ. Residue His-111 is part of the active site. An NADP(+)-binding site is contributed by Gly-137. The KARI C-terminal knotted domain occupies 186–331; sequence TFKEETETDL…NQLRDLVQKG (146 aa). 4 residues coordinate Mg(2+): Asp-194, Glu-198, Glu-230, and Glu-234. Ser-255 serves as a coordination point for substrate.

It belongs to the ketol-acid reductoisomerase family. The cofactor is Mg(2+).

The enzyme catalyses (2R)-2,3-dihydroxy-3-methylbutanoate + NADP(+) = (2S)-2-acetolactate + NADPH + H(+). It carries out the reaction (2R,3R)-2,3-dihydroxy-3-methylpentanoate + NADP(+) = (S)-2-ethyl-2-hydroxy-3-oxobutanoate + NADPH + H(+). It participates in amino-acid biosynthesis; L-isoleucine biosynthesis; L-isoleucine from 2-oxobutanoate: step 2/4. It functions in the pathway amino-acid biosynthesis; L-valine biosynthesis; L-valine from pyruvate: step 2/4. Functionally, involved in the biosynthesis of branched-chain amino acids (BCAA). Catalyzes an alkyl-migration followed by a ketol-acid reduction of (S)-2-acetolactate (S2AL) to yield (R)-2,3-dihydroxy-isovalerate. In the isomerase reaction, S2AL is rearranged via a Mg-dependent methyl migration to produce 3-hydroxy-3-methyl-2-ketobutyrate (HMKB). In the reductase reaction, this 2-ketoacid undergoes a metal-dependent reduction by NADPH to yield (R)-2,3-dihydroxy-isovalerate. The protein is Ketol-acid reductoisomerase (NADP(+)) of Saccharolobus solfataricus (strain ATCC 35092 / DSM 1617 / JCM 11322 / P2) (Sulfolobus solfataricus).